We begin with the raw amino-acid sequence, 299 residues long: Protease HtpX homolog (299 aa).

Transmembrane regions (helical) follow at residues 15–35 (ILLL…GYLF) and 39–59 (GLGG…SMIF). A Zn(2+)-binding site is contributed by His-143. The active site involves Glu-144. A Zn(2+)-binding site is contributed by His-147. The next 2 membrane-spanning stretches (helical) occupy residues 158 to 178 (IAVA…RMMW) and 198 to 218 (IIML…ATLV). Zn(2+) is bound at residue Glu-227.

Belongs to the peptidase M48B family. It depends on Zn(2+) as a cofactor.

The protein localises to the cell membrane. This Streptococcus pneumoniae serotype 19F (strain G54) protein is Protease HtpX homolog.